A 500-amino-acid polypeptide reads, in one-letter code: Lysine--tRNA ligase (500 aa).

The Mg(2+) site is built by glutamate 410 and glutamate 417.

The protein belongs to the class-II aminoacyl-tRNA synthetase family. As to quaternary structure, homodimer. The cofactor is Mg(2+).

The protein localises to the cytoplasm. It carries out the reaction tRNA(Lys) + L-lysine + ATP = L-lysyl-tRNA(Lys) + AMP + diphosphate. In Shewanella denitrificans (strain OS217 / ATCC BAA-1090 / DSM 15013), this protein is Lysine--tRNA ligase.